Reading from the N-terminus, the 344-residue chain is ATPase GET3 (344 aa).

Residue Lys-26–Thr-33 coordinates ATP. The active site involves Asp-57. Glu-239 and Asn-266 together coordinate ATP. Residues Cys-276 and Cys-279 each coordinate Zn(2+).

The protein belongs to the arsA ATPase family. In terms of assembly, homodimer. Component of the Golgi to ER traffic (GET) complex, which is composed of GET1, GET2 and GET3. Within the complex, GET1 and GET2 form a heterotetramer which is stabilized by phosphatidylinositol binding and which binds to the GET3 homodimer. Interacts with the chloride channel protein GEF1.

It localises to the cytoplasm. The protein localises to the endoplasmic reticulum. It is found in the golgi apparatus. Functionally, ATPase required for the post-translational delivery of tail-anchored (TA) proteins to the endoplasmic reticulum. Recognizes and selectively binds the transmembrane domain of TA proteins in the cytosol. This complex then targets to the endoplasmic reticulum by membrane-bound receptors GET1 and GET2, where the tail-anchored protein is released for insertion. This process is regulated by ATP binding and hydrolysis. ATP binding drives the homodimer towards the closed dimer state, facilitating recognition of newly synthesized TA membrane proteins. ATP hydrolysis is required for insertion. Subsequently, the homodimer reverts towards the open dimer state, lowering its affinity for the GET1-GET2 receptor, and returning it to the cytosol to initiate a new round of targeting. Cooperates with the HDEL receptor ERD2 to mediate the ATP-dependent retrieval of resident ER proteins that contain a C-terminal H-D-E-L retention signal from the Golgi to the ER. Involved in low-level resistance to the oxyanions arsenite and arsenate, and in heat tolerance. The polypeptide is ATPase GET3 (Komagataella phaffii (strain GS115 / ATCC 20864) (Yeast)).